Consider the following 688-residue polypeptide: GTPase IMAP family member 8 (688 aa).

Residues 1-14 are compositionally biased toward low complexity; it reads MATSSHQGAAAGSQ. The tract at residues 1–42 is disordered; sequence MATSSHQGAAAGSQAEHRSCEASVGQGERPSASQGQEGNFKQ. A compositionally biased stretch (polar residues) spans 31–42; sequence SASQGQEGNFKQ. 3 AIG1-type G domains span residues 46 to 247, 282 to 472, and 473 to 677; these read TSTL…MESS, MPEL…VIRE, and KELL…GQLK. The segment at 55–62 is G1; it reads GKQGAGKS. GTP-binding positions include 55–63 and Ser76; that span reads GKQGAGKSA. The tract at residues 82–86 is G2; sequence MVTDR. Residues 103–106 form a G3 region; that stretch reads DTPD. A G4 region spans residues 172–175; that stretch reads TRED. Residues 173 to 175 and Asn209 contribute to the GTP site; that span reads RED. Positions 208–210 are G5; sequence NNK.

This sequence belongs to the TRAFAC class TrmE-Era-EngA-EngB-Septin-like GTPase superfamily. AIG1/Toc34/Toc159-like paraseptin GTPase family. IAN subfamily. In terms of tissue distribution, abundantly expressed in the thymus (in thymocytes), spleen (in splenocytes), lymph node, followed by bone marrow and lung.

It is found in the endoplasmic reticulum. The protein resides in the golgi apparatus. It localises to the mitochondrion. Its subcellular location is the cytoplasm. The protein localises to the cytosol. Functionally, exerts an anti-apoptotic effect in the immune system and is involved in responses to infections. In Mus musculus (Mouse), this protein is GTPase IMAP family member 8 (Gimap8).